A 527-amino-acid polypeptide reads, in one-letter code: Transcription factor bHLH157 (527 aa).

Disordered regions lie at residues 295 to 318 (SGVN…LFPQ) and 335 to 368 (SSIG…KDRQ). The span at 307 to 318 (TSSAHSSSLFPQ) shows a compositional bias: polar residues. The short motif at 341–348 (WKKPHEEG) is the Nuclear localization signal element. Over residues 343 to 368 (KPHEEGVKKKRAKAGESRRPRPKDRQ) the composition is skewed to basic and acidic residues. The 50-residue stretch at 354 to 403 (AKAGESRRPRPKDRQMIQDRIKELRGMIPNGAKCSIDTLLDLTIKHMVFM) folds into the bHLH domain.

The protein belongs to the bHLH protein family. LHW subfamily. Homodimer.

The protein localises to the nucleus. In terms of biological role, transcription factor that may regulate root development. The protein is Transcription factor bHLH157 (BHLH157) of Arabidopsis thaliana (Mouse-ear cress).